Here is a 192-residue protein sequence, read N- to C-terminus: UPF0312 protein PSPTO_5071 (192 aa).

The first 23 residues, 1–23 (MLKKSLAALALGTALLSAGQAMA), serve as a signal peptide directing secretion.

Belongs to the UPF0312 family. Type 1 subfamily.

The protein localises to the periplasm. The chain is UPF0312 protein PSPTO_5071 from Pseudomonas syringae pv. tomato (strain ATCC BAA-871 / DC3000).